The sequence spans 181 residues: Peptidyl-tRNA hydrolase (181 aa).

Position 14 (Y14) interacts with tRNA. The Proton acceptor role is filled by H19. Y60, N62, and N108 together coordinate tRNA.

Belongs to the PTH family. As to quaternary structure, monomer.

The protein resides in the cytoplasm. It catalyses the reaction an N-acyl-L-alpha-aminoacyl-tRNA + H2O = an N-acyl-L-amino acid + a tRNA + H(+). Functionally, hydrolyzes ribosome-free peptidyl-tRNAs (with 1 or more amino acids incorporated), which drop off the ribosome during protein synthesis, or as a result of ribosome stalling. Its function is as follows. Catalyzes the release of premature peptidyl moieties from peptidyl-tRNA molecules trapped in stalled 50S ribosomal subunits, and thus maintains levels of free tRNAs and 50S ribosomes. This chain is Peptidyl-tRNA hydrolase, found in Metamycoplasma arthritidis (strain 158L3-1) (Mycoplasma arthritidis).